Consider the following 60-residue polypeptide: Small ribosomal subunit protein bS21 (60 aa).

The protein belongs to the bacterial ribosomal protein bS21 family.

This chain is Small ribosomal subunit protein bS21 (rpsU), found in Mycoplasma pneumoniae (strain ATCC 29342 / M129 / Subtype 1) (Mycoplasmoides pneumoniae).